The following is a 378-amino-acid chain: Succinyl-diaminopimelate desuccinylase (378 aa).

A Zn(2+)-binding site is contributed by His-68. The active site involves Asp-70. Residue Asp-101 coordinates Zn(2+). The Proton acceptor role is filled by Glu-135. Glu-136, Glu-164, and His-350 together coordinate Zn(2+).

The protein belongs to the peptidase M20A family. DapE subfamily. In terms of assembly, homodimer. Zn(2+) serves as cofactor. Requires Co(2+) as cofactor.

The enzyme catalyses N-succinyl-(2S,6S)-2,6-diaminopimelate + H2O = (2S,6S)-2,6-diaminopimelate + succinate. Its pathway is amino-acid biosynthesis; L-lysine biosynthesis via DAP pathway; LL-2,6-diaminopimelate from (S)-tetrahydrodipicolinate (succinylase route): step 3/3. Its function is as follows. Catalyzes the hydrolysis of N-succinyl-L,L-diaminopimelic acid (SDAP), forming succinate and LL-2,6-diaminopimelate (DAP), an intermediate involved in the bacterial biosynthesis of lysine and meso-diaminopimelic acid, an essential component of bacterial cell walls. The protein is Succinyl-diaminopimelate desuccinylase of Acinetobacter baumannii (strain ACICU).